The following is a 151-amino-acid chain: Mini-ribonuclease 3 (151 aa).

The active site involves Asp30.

It belongs to the MrnC RNase family. Homodimer. It depends on Mg(2+) as a cofactor.

It localises to the cytoplasm. Its function is as follows. Involved in correct processing of both the 5' and 3' ends of 23S rRNA precursor. Processes 30S rRNA precursor transcript even in absence of ribonuclease 3 (Rnc); Rnc processes 30S rRNA into smaller rRNA precursors. The chain is Mini-ribonuclease 3 from Thermosynechococcus vestitus (strain NIES-2133 / IAM M-273 / BP-1).